Reading from the N-terminus, the 210-residue chain is uncharacterized protein (210 aa).

This is an uncharacterized protein from Mycobacterium bovis (strain ATCC BAA-935 / AF2122/97).